Here is a 236-residue protein sequence, read N- to C-terminus: Acetate--CoA ligase [ADP-forming] II subunit beta (236 aa).

Residues 26–62 (KQVLKAYGLPVPEEKLAKTLDEALKYAEEIGYPVAMK) form the ATP-grasp domain. Residue 52-63 (AEEIGYPVAMKL) participates in ATP binding.

It belongs to the acetate CoA ligase beta subunit family. Heterotetramer of two alpha and two beta subunits.

The catalysed reaction is acetate + ATP + CoA = acetyl-CoA + ADP + phosphate. Functionally, catalyzes the reversible formation of acetate and ATP from acetyl-CoA by using ADP and phosphate. Can use other substrates such as phenylacetyl-CoA, indoleacetyl-CoA and isobutyryl-CoA, but not succinyl-CoA. Seems to be involved primarily in the degradation of aryl-CoA esters to the corresponding acids. Participates in the conversion of acetyl-CoA to acetate and in the degradation of branched-chain amino acids via branched-chain-acyl-CoA esters. This Pyrococcus furiosus (strain ATCC 43587 / DSM 3638 / JCM 8422 / Vc1) protein is Acetate--CoA ligase [ADP-forming] II subunit beta.